Reading from the N-terminus, the 471-residue chain is ATP synthase subunit beta (471 aa).

Residue 158–165 (GGAGCGKT) coordinates ATP.

Belongs to the ATPase alpha/beta chains family. In terms of assembly, F-type ATPases have 2 components, CF(1) - the catalytic core - and CF(0) - the membrane proton channel. CF(1) has five subunits: alpha(3), beta(3), gamma(1), delta(1), epsilon(1). CF(0) has three main subunits: a(1), b(2) and c(9-12). The alpha and beta chains form an alternating ring which encloses part of the gamma chain. CF(1) is attached to CF(0) by a central stalk formed by the gamma and epsilon chains, while a peripheral stalk is formed by the delta and b chains.

It is found in the cell inner membrane. It carries out the reaction ATP + H2O + 4 H(+)(in) = ADP + phosphate + 5 H(+)(out). Functionally, produces ATP from ADP in the presence of a proton gradient across the membrane. The catalytic sites are hosted primarily by the beta subunits. This is ATP synthase subunit beta from Desulfotalea psychrophila (strain LSv54 / DSM 12343).